We begin with the raw amino-acid sequence, 891 residues long: MKVGQDSLSTKSQLTVDGKTYNYYSLKEAENKHFKGINRLPYSLKVLLENLLRFEDGNTVTTKDIKAIADWLHNKTSQHEIAFRPTRVLMQDFTGVPAVVDLAAMRTAIVKMGGNADKISPLSPVDLVIDHSVMVDKFASADALEVNTKIEIERNKERYEFLRWGQKAFSNFQVVPPGTGICHQVNLEYLGKTVWNSENDGQLYAYPDTLVGTDSHTTMINGLGVLGWGVGGIEAEAAMLGQPVSMLIPEVIGFKLSGKLKEGITATDLVLTVTQMLRKKGVVGKFVEFYGPGLNDLPLADRATISNMAPEYGATCGFFPVDKETIKYLELTGRDKHTIALVEAYAKAQGMWYDKDNEEPVFTDSLHLDLGSVEPSLAGPKRPQDKVNLSSLPVEFNNFLIEVGKEKEKEKTFAVKNKDFQMKHGHVVIAAITSCTNTSNPSVLMAAGLVAKKAIEKGLQRKPWVKSSLAPGSKVVTDYLRHAGLQTYLDQLGFNLVGYGCTTCIGNSGPLPDDISHCVAEHDLVVSSVLSGNRNFEGRVHPQVRANWLASPPLVVAYALCGTTCSDLSREPIGQDKEGNDVYLKDIWPSNEEIAAEVAKVSGTMFRKEYAEVFKGDAHWQAIQTSSGQTYEWNPDSTYIQHPPFFENLSLKPEPLKPIKQAYVLALFGDSITTDHISPAGSIKASSPAGLYLKSKGVDEKDFNSYGSRRGNHEVMMRGTFANIRIRNEMTPGQEGGVTRYVPTGETMSIYDAAMRYQENQQDLVIIAGKEYGTGSSRDWAAKGTNLLGVKAVITESFERIHRSNLIGMGILPLQFKEGTTRKTLKLDGSERISIEISDKLTPGAMVPVTIERQDGDIEKIETLCRIDTADELEYYKNGGILQYVLRKISS.

[4Fe-4S] cluster is bound by residues C435, C501, and C504.

This sequence belongs to the aconitase/IPM isomerase family. Monomer. The cofactor is [4Fe-4S] cluster.

The enzyme catalyses citrate = D-threo-isocitrate. The catalysed reaction is (2S,3R)-3-hydroxybutane-1,2,3-tricarboxylate = 2-methyl-cis-aconitate + H2O. It functions in the pathway carbohydrate metabolism; tricarboxylic acid cycle; isocitrate from oxaloacetate: step 2/2. The protein operates within organic acid metabolism; propanoate degradation. Its function is as follows. Involved in the catabolism of short chain fatty acids (SCFA) via the tricarboxylic acid (TCA)(acetyl degradation route) and probably the 2-methylcitrate cycle I (propionate degradation route). Catalyzes the reversible isomerization of citrate to isocitrate via cis-aconitate. The apo form of AcnA functions as a RNA-binding regulatory protein. Could catalyze the hydration of 2-methyl-cis-aconitate to yield (2R,3S)-2-methylisocitrate. In Legionella pneumophila subsp. pneumophila (strain Philadelphia 1 / ATCC 33152 / DSM 7513), this protein is Aconitate hydratase A (acn).